Reading from the N-terminus, the 89-residue chain is Small ribosomal subunit protein uS15 (89 aa).

This sequence belongs to the universal ribosomal protein uS15 family. In terms of assembly, part of the 30S ribosomal subunit. Forms a bridge to the 50S subunit in the 70S ribosome, contacting the 23S rRNA.

One of the primary rRNA binding proteins, it binds directly to 16S rRNA where it helps nucleate assembly of the platform of the 30S subunit by binding and bridging several RNA helices of the 16S rRNA. In terms of biological role, forms an intersubunit bridge (bridge B4) with the 23S rRNA of the 50S subunit in the ribosome. The polypeptide is Small ribosomal subunit protein uS15 (Prosthecochloris aestuarii (strain DSM 271 / SK 413)).